Reading from the N-terminus, the 339-residue chain is Ribosomal RNA large subunit methyltransferase M (339 aa).

S-adenosyl-L-methionine contacts are provided by residues serine 176, 206–209, aspartate 225, aspartate 245, and aspartate 261; that span reads APGG. The Proton acceptor role is filled by lysine 290.

Belongs to the class I-like SAM-binding methyltransferase superfamily. RNA methyltransferase RlmE family. RlmM subfamily. As to quaternary structure, monomer.

Its subcellular location is the cytoplasm. It catalyses the reaction cytidine(2498) in 23S rRNA + S-adenosyl-L-methionine = 2'-O-methylcytidine(2498) in 23S rRNA + S-adenosyl-L-homocysteine + H(+). Functionally, catalyzes the 2'-O-methylation at nucleotide C2498 in 23S rRNA. This Halorhodospira halophila (strain DSM 244 / SL1) (Ectothiorhodospira halophila (strain DSM 244 / SL1)) protein is Ribosomal RNA large subunit methyltransferase M.